Consider the following 507-residue polypeptide: RNA demethylase ALKBH9B (507 aa).

Disordered regions lie at residues 76–102 (GSER…DNHS) and 145–183 (QEDE…LSRD). A compositionally biased stretch (basic and acidic residues) spans 89–100 (DEKSENGEDCDN). A compositionally biased stretch (acidic residues) spans 145–160 (QEDEFDEEEEEEEEER). The span at 174 to 183 (TPEKPKLSRD) shows a compositional bias: basic and acidic residues. Positions 317 to 414 (VPDSCIVNIY…RISITFRKMD (98 aa)) constitute a Fe2OG dioxygenase domain. Fe cation-binding residues include histidine 335, aspartate 337, and histidine 396. Arginine 405 contributes to the 2-oxoglutarate binding site. The disordered stretch occupies residues 432–507 (EPLPLDLNRS…MPRPSRRNYG (76 aa)). The span at 440 to 450 (RSGSTSRFSRL) shows a compositional bias: polar residues. The segment covering 497–507 (GMPRPSRRNYG) has biased composition (basic residues).

Belongs to the alkB family. As to quaternary structure, (Microbial infection) Interacts with the capsid protein ORF3b of the alfalfa mosaic virus (AMV). It depends on Fe(2+) as a cofactor.

Its subcellular location is the cytoplasm. The protein resides in the P-body. The protein localises to the cytoplasmic granule. The enzyme catalyses an N(6)-methyladenosine in mRNA + 2-oxoglutarate + O2 = an adenosine in mRNA + formaldehyde + succinate + CO2. Dioxygenase that demethylates RNA by oxidative demethylation: specifically demethylates N(6)-methyladenosine (m6A) RNA, the most prevalent internal modification of messenger RNA (mRNA) in higher eukaryotes. Modulates viral infection of the alfalfa mosaic virus (AMV) and the m6A abundance in its genomic RNAs. In Arabidopsis thaliana (Mouse-ear cress), this protein is RNA demethylase ALKBH9B.